The chain runs to 268 residues: Protein MGF 300-1L (268 aa).

Over methionine 1 to asparagine 175 the chain is Cytoplasmic. A helical transmembrane segment spans residues tyrosine 176–tyrosine 193. At threonine 194 to tryptophan 268 the chain is on the extracellular side.

Belongs to the asfivirus MGF 300 family.

The protein localises to the host membrane. Its function is as follows. Plays a role in virus cell tropism, and may be required for efficient virus replication in macrophages. This chain is Protein MGF 300-1L, found in Ornithodoros (relapsing fever ticks).